The sequence spans 1268 residues: Meiosis inhibitor protein 1 (1268 aa).

Strongly expressed in testis, weakly in brain, and not detected in spleen, liver, kidney, small intestine or colon.

In terms of biological role, required for normal meiotic chromosome synapsis. May be involved in the formation of meiotic double-strand breaks (DSBs) in spermatocytes. The polypeptide is Meiosis inhibitor protein 1 (Mus musculus (Mouse)).